A 271-amino-acid chain; its full sequence is MVENIGSGSAELVSYAKLNLYLDVLGKRSDGYHEIVGLFQTISLHDTLTVEICDRGFYLESSVALPSDNTIKRAWEMFRKNTGKEFGLKVTLKKEIPVGSGLGGGSSNAAAVLRYLGEVFKIPLEDLLNIAAQVGSDVPFFLYGGTALVRGRGEIVEKLEDIEGYSVDLFFPGIHSSTKEMYLSLTPEMYRKGPGRVEELHRAYLERNYEKIKELSYNVFEKVFLEKHPEVMDGLRNFGDGSIVKMMTGSGSVFFALYPLDKGNYSFVGGV.

Residue Lys17 is part of the active site. ATP is bound at residue 97–107 (PVGSGLGGGSS). Asp137 is an active-site residue.

It belongs to the GHMP kinase family. IspE subfamily.

The enzyme catalyses 4-CDP-2-C-methyl-D-erythritol + ATP = 4-CDP-2-C-methyl-D-erythritol 2-phosphate + ADP + H(+). It participates in isoprenoid biosynthesis; isopentenyl diphosphate biosynthesis via DXP pathway; isopentenyl diphosphate from 1-deoxy-D-xylulose 5-phosphate: step 3/6. Its function is as follows. Catalyzes the phosphorylation of the position 2 hydroxy group of 4-diphosphocytidyl-2C-methyl-D-erythritol. This is 4-diphosphocytidyl-2-C-methyl-D-erythritol kinase from Thermotoga maritima (strain ATCC 43589 / DSM 3109 / JCM 10099 / NBRC 100826 / MSB8).